The following is a 202-amino-acid chain: Dephospho-CoA kinase (202 aa).

Residues 4 to 201 (VIGLTGGIAS…QKYLAMSKQN (198 aa)) enclose the DPCK domain. 12–17 (ASGKTT) lines the ATP pocket.

The protein belongs to the CoaE family.

The protein resides in the cytoplasm. It catalyses the reaction 3'-dephospho-CoA + ATP = ADP + CoA + H(+). It functions in the pathway cofactor biosynthesis; coenzyme A biosynthesis; CoA from (R)-pantothenate: step 5/5. Its function is as follows. Catalyzes the phosphorylation of the 3'-hydroxyl group of dephosphocoenzyme A to form coenzyme A. The polypeptide is Dephospho-CoA kinase (Vibrio vulnificus (strain CMCP6)).